Here is a 175-residue protein sequence, read N- to C-terminus: ATP synthase subunit delta (175 aa).

This sequence belongs to the ATPase delta chain family. In terms of assembly, F-type ATPases have 2 components, F(1) - the catalytic core - and F(0) - the membrane proton channel. F(1) has five subunits: alpha(3), beta(3), gamma(1), delta(1), epsilon(1). F(0) has three main subunits: a(1), b(2) and c(10-14). The alpha and beta chains form an alternating ring which encloses part of the gamma chain. F(1) is attached to F(0) by a central stalk formed by the gamma and epsilon chains, while a peripheral stalk is formed by the delta and b chains.

It localises to the cell inner membrane. Its function is as follows. F(1)F(0) ATP synthase produces ATP from ADP in the presence of a proton or sodium gradient. F-type ATPases consist of two structural domains, F(1) containing the extramembraneous catalytic core and F(0) containing the membrane proton channel, linked together by a central stalk and a peripheral stalk. During catalysis, ATP synthesis in the catalytic domain of F(1) is coupled via a rotary mechanism of the central stalk subunits to proton translocation. This protein is part of the stalk that links CF(0) to CF(1). It either transmits conformational changes from CF(0) to CF(1) or is implicated in proton conduction. The polypeptide is ATP synthase subunit delta (Xanthomonas oryzae pv. oryzae (strain PXO99A)).